Consider the following 711-residue polypeptide: MAVYRLCVTTGPYLRAGTLDNISVTLVGTCGESPKQRLDRMGRDFAPGSVQKYKVRCTAELGELLLLRVHKERYAFFRKDSWYCSRICVTEPDGSVSHFPCYQWIEGYCTVELRPGTARTICQDSLPLLLDHRTRELRARQECYRWKIYAPGFPCMVDVNSFQEMESDKKFALTKTTTCVDQGDSSGNRYLPGFPMKIDIPSLMYMEPNVRYSATKTISLLFNAIPASLGMKLRGLLDRKGSWKKLDDMQNIFWCHKTFTTKYVTEHWCEDHFFGYQYLNGVNPVMLHCISSLPSKLPVTNDMVAPLLGQDTCLQTELERGNIFLADYWILAEAPTHCLNGRQQYVAAPLCLLWLSPQGALVPLAIQLSQTPGPDSPIFLPTDSEWDWLLAKTWVRNSEFLVHENNTHFLCTHLLCEAFAMATLRQLPLCHPIYKLLLPHTRYTLQVNTIARATLLNPEGLVDQVTSIGRQGLIYLMSTGLAHFTYTNFCLPDSLRARGVLAIPNYHYRDDGLKIWAAIESFVSEIVGYYYPSDASVQQDSELQAWTGEIFAQAFLGRESSGFPSRLCTPGEMVKFLTAIIFNCSAQHAAVNSGQHDFGAWMPNAPSSMRQPPPQTKGTTTLKTYLDTLPEVNISCNNLLLFWLVSQEPKDQRPLGTYPDEHFTEEAPRRSIAAFQSRLAQISRDIQERNQGLALPYTYLDPPLIENSVSI.

The region spanning 2–119 (AVYRLCVTTG…TVELRPGTAR (118 aa)) is the PLAT domain. Residues 120–711 (TICQDSLPLL…PPLIENSVSI (592 aa)) enclose the Lipoxygenase domain. Positions 408, 413, 588, 592, and 711 each coordinate Fe cation.

It belongs to the lipoxygenase family. Fe cation serves as cofactor. In terms of tissue distribution, predominantly expressed in skin.

The protein localises to the cytoplasm. It catalyses the reaction a hydroperoxyeicosatetraenoate = a hydroxy-epoxy-eicosatetraenoate. It carries out the reaction (12R)-hydroperoxy-(5Z,8Z,10E,14Z)-eicosatetraenoate = (8R)-hydroxy-(11R,12R)-epoxy-(5Z,9E,14Z)-eicosatrienoate. The catalysed reaction is (12S)-hydroperoxy-(5Z,8Z,10E,14Z)-eicosatetraenoate = (8R)-hydroxy-(11S,12S)-epoxy-(5Z,9E,14Z)-eicosatrienoate. The enzyme catalyses (12S)-hydroperoxy-(5Z,8Z,10E,14Z)-eicosatetraenoate = (10R)-hydroxy-(11S,12S)-epoxy-(5Z,8Z,14Z)-eicosatrienoate. It catalyses the reaction (15S)-hydroperoxy-(5Z,8Z,11Z,13E)-eicosatetraenoate = (13R)-hydroxy-(14S,15S)-epoxy-(5Z,8Z,11Z)-eicosatrienoate. It carries out the reaction (5S)-hydroperoxy-(6E,8Z,11Z,14Z)-eicosatetraenoate = 7R-hydroxy-5S,6S-epoxy-(8Z,11Z,14Z)-eicosatrienoate. The catalysed reaction is (13S)-hydroperoxy-(9Z,11E)-octadecadienoate = 11-hydroxy-(12S,13S)-epoxy-(9Z)-octadecenoate. The enzyme catalyses N-[omega-(9R)-hydroperoxy-(10E,12Z)-octadecadienoyloxy]acyl-beta-D-glucosyl-(1&lt;-&gt;1)-octadecasphing-4E-enine = a N-[omega-(9R,10R)-epoxy-(13R)-hydroxy-(11E)-octadecenoyloxy]acyl-beta-D-glucosyl-(1&lt;-&gt;1)-sphing-4E-enine. It catalyses the reaction a N-[omega-(9R)-hydroperoxy-(10E,12Z)-octadecadienoyloxy]-acylsphin-4E-enine = a N-[omega-(9R,10R)-epoxy-(13R)-hydroxy-(11E)-octadecenoyloxy]-acylsphing-4E-enine. It carries out the reaction a hydroperoxyeicosatetraenoate = an oxoeicosatetraenoate + H2O. The catalysed reaction is (12R)-hydroperoxy-(5Z,8Z,10E,14Z)-eicosatetraenoate = 12-oxo-(5Z,8Z,10E,14Z)-eicosatetraenoate + H2O. The enzyme catalyses (12S)-hydroperoxy-(5Z,8Z,10E,14Z)-eicosatetraenoate = 12-oxo-(5Z,8Z,10E,14Z)-eicosatetraenoate + H2O. It catalyses the reaction (15S)-hydroperoxy-(5Z,8Z,11Z,13E)-eicosatetraenoate = 15-oxo-(5Z,8Z,11Z,13E)-eicosatetraenoate + H2O. It carries out the reaction (13S)-hydroperoxy-(9Z,11E)-octadecadienoate = 13-oxo-(9Z,11E)-octadecadienoate + H2O. The catalysed reaction is (8S)-hydroperoxy-(5Z,9E,11Z,14Z)-eicosatetraenoate = (10R)-hydroxy-(8S,9S)-epoxy-(5Z,11Z,14Z)-eicosatrienoate. The enzyme catalyses (8R)-hydroperoxy-(5Z,9E,11Z,14Z)-eicosatetraenoate = 8-oxo-(5Z,9E,11Z,14Z)-eicosatetraenoate + H2O. It catalyses the reaction (8S)-hydroperoxy-(5Z,9E,11Z,14Z)-eicosatetraenoate = 8-oxo-(5Z,9E,11Z,14Z)-eicosatetraenoate + H2O. Its pathway is lipid metabolism; hydroperoxy eicosatetraenoic acid biosynthesis. The protein operates within lipid metabolism; sphingolipid metabolism. Lipoxygenase activity is activated by 13(S)-HPODE leading to an active free ferric enzyme. The lipoxygenase and hydroperoxide isomerase activities are in competition and are reciprocally regulated by oxygen. The oxygen reacts with an epoxyallylic radical intermediate leading to an epoxyallylic peroxyl radical, which, due to its limited reactivity within the enzyme active site, it dissociates and leaves the enzyme in the activated free ferric state. Its function is as follows. Non-heme iron-containing lipoxygenase which is atypical in that it displays a prominent hydroperoxide isomerase activity and a reduced lipoxygenases activity. The hydroperoxide isomerase activity catalyzes the isomerization of hydroperoxides, derived from arachidonic and linoleic acid by ALOX12B, into hepoxilin-type epoxyalcohols and ketones. In presence of oxygen, oxygenates polyunsaturated fatty acids, including arachidonic acid, to produce fatty acid hydroperoxides. In the skin, acts downstream of ALOX12B on the linoleate moiety of esterified omega-hydroxyacyl-sphingosine (EOS) ceramides to produce an epoxy-ketone derivative, a crucial step in the conjugation of omega-hydroxyceramide to membrane proteins. Therefore plays a crucial role in the synthesis of corneocytes lipid envelope and the establishment of the skin barrier to water loss. In parallel, it may have a signaling function in barrier formation through the production of hepoxilins metabolites. Also plays a role in adipocyte differentiation through hepoxilin A3 and hepoxilin B3 production which in turn activate PPARG. Through the production of hepoxilins in the spinal cord, it may regulate inflammatory tactile allodynia. The polypeptide is Hydroperoxide isomerase ALOXE3 (Homo sapiens (Human)).